The primary structure comprises 144 residues: Catabolic 3-dehydroquinase (144 aa).

Tyrosine 24 acts as the Proton acceptor in catalysis. Residues asparagine 76, histidine 82, and aspartate 89 each coordinate substrate. Histidine 102 (proton donor) is an active-site residue. Residues isoleucine 103 to threonine 104 and arginine 113 contribute to the substrate site.

The protein belongs to the type-II 3-dehydroquinase family. Homododecamer. Adopts a ring-like structure, composed of an arrangement of two hexameric rings stacked on top of one another.

It catalyses the reaction 3-dehydroquinate = 3-dehydroshikimate + H2O. It participates in aromatic compound metabolism; 3,4-dihydroxybenzoate biosynthesis; 3,4-dihydroxybenzoate from 3-dehydroquinate: step 1/2. Functionally, is involved in the catabolism of quinate. Allows the utilization of quinate as carbon source via the beta-ketoadipate pathway. The sequence is that of Catabolic 3-dehydroquinase from Debaryomyces hansenii (strain ATCC 36239 / CBS 767 / BCRC 21394 / JCM 1990 / NBRC 0083 / IGC 2968) (Yeast).